The primary structure comprises 274 residues: NH(3)-dependent NAD(+) synthetase (274 aa).

46 to 53 (GISGGQDS) provides a ligand contact to ATP. Asp52 is a Mg(2+) binding site. Arg140 is a deamido-NAD(+) binding site. Residue Thr160 participates in ATP binding. Glu165 serves as a coordination point for Mg(2+). Residues Lys173 and Asp180 each coordinate deamido-NAD(+). The ATP site is built by Lys189 and Thr211. Deamido-NAD(+) is bound at residue 260 to 261 (HK).

It belongs to the NAD synthetase family. In terms of assembly, homodimer.

The catalysed reaction is deamido-NAD(+) + NH4(+) + ATP = AMP + diphosphate + NAD(+) + H(+). The protein operates within cofactor biosynthesis; NAD(+) biosynthesis; NAD(+) from deamido-NAD(+) (ammonia route): step 1/1. Functionally, catalyzes the ATP-dependent amidation of deamido-NAD to form NAD. Uses ammonia as a nitrogen source. In Streptococcus pneumoniae (strain 70585), this protein is NH(3)-dependent NAD(+) synthetase.